The chain runs to 293 residues: METGTSRVKRGMAEMQKGGVIMDVMNAEQAKVAEAAGASAVMALERVPSDIRAAGGVARMADPTVLEEVMKVVSIPVMAKARIGHIVEARVLEALGADYIDESEVLTPADEVFHIDKKDFTVPFVCGAKDIGEALRRINEGASMLRTKGEPGTGNIVEAVRHMRLIQSQIRKIQSLAKDELYAEAKNLGAPYDLVLYIHENGKLPVVNFAAGGVATPSDAALMMELGADGVFVGSGIFKSDSPEKFARAIVEATTHYKDYKLIAEVSKNLGAPMKGIEISKLHASERMQDRGW.

Residue D23 participates in D-ribose 5-phosphate binding. K80 acts as the Schiff-base intermediate with D-ribose 5-phosphate in catalysis. G152 is a D-ribose 5-phosphate binding site. R164 contacts D-glyceraldehyde 3-phosphate. D-ribose 5-phosphate is bound by residues G213 and G234–S235.

It belongs to the PdxS/SNZ family. In terms of assembly, in the presence of PdxT, forms a dodecamer of heterodimers.

The enzyme catalyses aldehydo-D-ribose 5-phosphate + D-glyceraldehyde 3-phosphate + L-glutamine = pyridoxal 5'-phosphate + L-glutamate + phosphate + 3 H2O + H(+). It functions in the pathway cofactor biosynthesis; pyridoxal 5'-phosphate biosynthesis. In terms of biological role, catalyzes the formation of pyridoxal 5'-phosphate from ribose 5-phosphate (RBP), glyceraldehyde 3-phosphate (G3P) and ammonia. The ammonia is provided by the PdxT subunit. Can also use ribulose 5-phosphate and dihydroxyacetone phosphate as substrates, resulting from enzyme-catalyzed isomerization of RBP and G3P, respectively. The chain is Pyridoxal 5'-phosphate synthase subunit PdxS from Niallia circulans (Bacillus circulans).